A 291-amino-acid chain; its full sequence is MEMO1 family protein TON_0132 (291 aa).

This sequence belongs to the MEMO1 family.

This is MEMO1 family protein TON_0132 from Thermococcus onnurineus (strain NA1).